Reading from the N-terminus, the 466-residue chain is MSANQDYIVADIGLADFGRKEIAIAETEMPGLMACREEFGASKPLKGARITGSLHMTIQTAVLIETLVALGAEVRWASCNIFSTQDHAAAAIAASGVPVFAVKGETLEEYWTYTDKIFQWADGGVSNMILDDGGDATMYILLGARAEAGENILINPGSEEEEILFAQIKKRLAATPGWFTKQRDAIKGVTEETTTGVNRLYQLQAKGLLPFPAINVNDSVTKSKFDNKYGCKESLVDGIRRGTDVMMAGKVAVVCGYGDVGKGSAASLSGAGARVKVTEVDPICALQAAMDGYEVVQLEDVVSSADIFITTTGNKDVIRIEHMRAMKDMAIVGNIGHFDNEIQVSALRNLKWTNVKPQVDLIEFPKGNRIILLSEGRLLNLGNATGHPSFVMSASFSNQVLAQIELFTKGENYKNEVYVLPKQLDEKVARLHLAKLGAKLTELSEEQAAYIGVKAQGPFKAEHYRY.

The substrate site is built by threonine 57, aspartate 132, and glutamate 192. Residue 193–195 (TTT) coordinates NAD(+). Positions 222 and 226 each coordinate substrate. Residues asparagine 227, 256–261 (GYGDVG), glutamate 279, asparagine 314, 335–337 (IGH), and asparagine 380 contribute to the NAD(+) site.

Belongs to the adenosylhomocysteinase family. It depends on NAD(+) as a cofactor.

It localises to the cytoplasm. The enzyme catalyses S-adenosyl-L-homocysteine + H2O = L-homocysteine + adenosine. The protein operates within amino-acid biosynthesis; L-homocysteine biosynthesis; L-homocysteine from S-adenosyl-L-homocysteine: step 1/1. Its function is as follows. May play a key role in the regulation of the intracellular concentration of adenosylhomocysteine. This chain is Adenosylhomocysteinase, found in Sinorhizobium medicae (strain WSM419) (Ensifer medicae).